The chain runs to 424 residues: ATP-citrate synthase alpha chain protein 3 (424 aa).

Citrate contacts are provided by Asn343, Thr345, and Arg376.

It belongs to the succinate/malate CoA ligase beta subunit family. Heterooctamer of 4 alpha and 4 beta chains.

The protein localises to the cytoplasm. Its subcellular location is the cytosol. The catalysed reaction is oxaloacetate + acetyl-CoA + ADP + phosphate = citrate + ATP + CoA. ATP citrate-lyase is the primary enzyme responsible for the synthesis of cytosolic acetyl-CoA, used for the elongation of fatty acids and biosynthesis of isoprenoids, flavonoids and malonated derivatives. May supply substrate to the cytosolic acetyl-CoA carboxylase, which generates the malonyl-CoA used for the synthesis of a multitude of compounds, including very long chain fatty acids and flavonoids. Required for normal growth and development and elongation of C18 fatty acids to C20 to C24 fatty acids in seeds. In contrast to all known animal ACL enzymes having a homomeric structure, plant ACLs are composed of alpha and beta chains. The protein is ATP-citrate synthase alpha chain protein 3 (ACLA-3) of Arabidopsis thaliana (Mouse-ear cress).